A 267-amino-acid chain; its full sequence is MKKILLLLVLIVAVLNFGKTIVTTINPYYLIVSQLLGDTASVKLLVPPGANPHLFSLKPSDAKTLEEADLIVANGLGLEPYLEKYREKTVFVSDFIPALLLIDDNPHIWLDPFFLKYYIVPGLYQVLIEKFPEKQSEIKQKAEEIVSGLDTVIRDSFKALLPYTGKTVVMAHPSFTYFFKEFGLELITLSSGHEHSTSFSTIKEILRKKEQIVALFREPQQPAEILSSLEKELRMKSFVLDPLGVNGEKTIVELLRKNLSVIQEALK.

The N-terminal stretch at 1 to 15 (MKKILLLLVLIVAVL) is a signal peptide. 3 residues coordinate a divalent metal cation: histidine 53, histidine 107, and histidine 172.

This sequence belongs to the bacterial solute-binding protein 9 family.

It is found in the periplasm. Its function is as follows. Part of an ATP-binding cassette (ABC) transport system involved in metal import. Binds a metal with high affinity and specificity and delivers it to the membrane permease for translocation into the cytoplasm. The sequence is that of Putative metal-binding protein TM_0123 from Thermotoga maritima (strain ATCC 43589 / DSM 3109 / JCM 10099 / NBRC 100826 / MSB8).